The chain runs to 276 residues: Undecaprenyl-diphosphatase 1 (276 aa).

A run of 6 helical transmembrane segments spans residues 43 to 63, 85 to 105, 109 to 129, 184 to 204, 214 to 234, and 254 to 274; these read RAMA…VWEF, ANLL…ADLI, LFNP…MLWA, ATEF…VYSG, ADFP…MIAV, and IVFG…WTAA.

The protein belongs to the UppP family.

Its subcellular location is the cell inner membrane. It catalyses the reaction di-trans,octa-cis-undecaprenyl diphosphate + H2O = di-trans,octa-cis-undecaprenyl phosphate + phosphate + H(+). Its function is as follows. Catalyzes the dephosphorylation of undecaprenyl diphosphate (UPP). Confers resistance to bacitracin. This chain is Undecaprenyl-diphosphatase 1, found in Pseudomonas fluorescens (strain Pf0-1).